Consider the following 522-residue polypeptide: MKHRTFFSLCAKFGCLLALGACSPKIVDAGAATVPHTLSTLKTADNRPASVYLKKDKPTLIKFWASWCPLCLSELGQTEKWAQDAKFSSANLITVASPGFLHEKKDGDFQKWYAGLNYPKLPVVTDNGGTIAQSLNISVYPSWALIGKDGDVQRIVKGSINEAQALALIRDPNADLGSLKHSFYKPDTQKKDSKIMNTRTIYLAGGCFWGLEAYFQRIDGVVDAVSGYANGNTKNPSYEDVSYRHTGHAETVKVTYDADKLSLDDILQYFFRVVDPTSLNKQGNDTGTQYRSGVYYTDPAEKAVIAAALKREQQKYQLPLVVENEPLKNFYDAEEYHQDYLIKNPNGYCHIDIRKADEPLPGKTKTAPQGKGFDAATYKKPSDAELKRTLTEEQYQVTQNSATEYAFSHEYDHLFKPGIYVDVVSGEPLFSSADKYDSGCGWPSFTRPIDAKSVTEHDDFSYNMRRTEVRSHAADSHLGHVFPDGPRDKGGLRYCINGASLKFIPLEQMDAAGYGALKSKVK.

In terms of domain architecture, Thioredoxin spans 17–174; sequence LALGACSPKI…ALALIRDPNA (158 aa). C68 and C71 are oxidised to a cystine. Positions 199–354 are peptide methionine sulfoxide reductase A; the sequence is RTIYLAGGCF…PNGYCHIDIR (156 aa). C207 is an active-site residue. The region spanning 383-506 is the MsrB domain; that stretch reads DAELKRTLTE…NGASLKFIPL (124 aa). Cysteines 440 and 495 form a disulfide. Residue C495 is the Nucleophile of the active site.

This sequence in the N-terminal section; belongs to the thioredoxin family. It in the central section; belongs to the MsrA Met sulfoxide reductase family. The protein in the C-terminal section; belongs to the MsrB Met sulfoxide reductase family.

It carries out the reaction L-methionyl-[protein] + [thioredoxin]-disulfide + H2O = L-methionyl-(S)-S-oxide-[protein] + [thioredoxin]-dithiol. It catalyses the reaction [thioredoxin]-disulfide + L-methionine + H2O = L-methionine (S)-S-oxide + [thioredoxin]-dithiol. The catalysed reaction is L-methionyl-[protein] + [thioredoxin]-disulfide + H2O = L-methionyl-(R)-S-oxide-[protein] + [thioredoxin]-dithiol. In terms of biological role, has an important function as a repair enzyme for proteins that have been inactivated by oxidation. Catalyzes the reversible oxidation-reduction of methionine sulfoxide in proteins to methionine. The sequence is that of Peptide methionine sulfoxide reductase MsrA/MsrB (msrAB) from Neisseria meningitidis serogroup A / serotype 4A (strain DSM 15465 / Z2491).